A 135-amino-acid chain; its full sequence is Small ribosomal subunit protein uS11 (135 aa).

The protein belongs to the universal ribosomal protein uS11 family. As to quaternary structure, part of the 30S ribosomal subunit. Interacts with proteins S7 and S18. Binds to IF-3.

Functionally, located on the platform of the 30S subunit, it bridges several disparate RNA helices of the 16S rRNA. Forms part of the Shine-Dalgarno cleft in the 70S ribosome. The chain is Small ribosomal subunit protein uS11 from Polynucleobacter necessarius subsp. necessarius (strain STIR1).